The sequence spans 526 residues: Trigger factor (526 aa).

The 82-residue stretch at 162 to 243 folds into the PPIase FKBP-type domain; the sequence is GDFVSIDLSA…LGSVKERELP (82 aa). Positions 425–460 are enriched in basic and acidic residues; that stretch reads DTDGADVDPKEYFGDVEAEGDKADKAETDKAEEKPK. Positions 425–526 are disordered; the sequence is DTDGADVDPK…AKKAAEKKED (102 aa). Basic residues predominate over residues 461–517; that stretch reads KAPAKKSTTKKSTAKKSTAKKSTAKKSTAKKSTAKKSTTKKATKSTAKKSTAKKTTA.

It belongs to the FKBP-type PPIase family. Tig subfamily.

Its subcellular location is the cytoplasm. It carries out the reaction [protein]-peptidylproline (omega=180) = [protein]-peptidylproline (omega=0). Its function is as follows. Involved in protein export. Acts as a chaperone by maintaining the newly synthesized protein in an open conformation. Functions as a peptidyl-prolyl cis-trans isomerase. This Corynebacterium jeikeium (strain K411) protein is Trigger factor.